The chain runs to 37 residues: MKIRASVRKICTKCQLIRRKGRIRVICSNPRHKQRQR.

This sequence belongs to the bacterial ribosomal protein bL36 family.

It localises to the plastid. The protein localises to the chloroplast. This is Large ribosomal subunit protein bL36c from Pelargonium hortorum (Common geranium).